A 215-amino-acid polypeptide reads, in one-letter code: Riboflavin synthase (215 aa).

Lumazine-binding repeat units lie at residues 1 to 96 (MFTG…FGGH) and 97 to 193 (IVSG…EQFL). 2,4-dihydroxypteridine-binding positions include 4–6 (GII), 47–49 (CLT), 61–66 (DVMSET), 100–102 (GHI), Lys-135, 144–146 (SLT), and 158–163 (SIIPHT).

Homotrimer.

It carries out the reaction 2 6,7-dimethyl-8-(1-D-ribityl)lumazine + H(+) = 5-amino-6-(D-ribitylamino)uracil + riboflavin. It functions in the pathway cofactor biosynthesis; riboflavin biosynthesis; riboflavin from 2-hydroxy-3-oxobutyl phosphate and 5-amino-6-(D-ribitylamino)uracil: step 2/2. Its function is as follows. Catalyzes the dismutation of two molecules of 6,7-dimethyl-8-ribityllumazine, resulting in the formation of riboflavin and 5-amino-6-(D-ribitylamino)uracil. The chain is Riboflavin synthase (ribE) from Actinobacillus pleuropneumoniae (Haemophilus pleuropneumoniae).